The sequence spans 330 residues: DNA-directed RNA polymerase subunit alpha (330 aa).

Positions methionine 1–asparagine 225 are alpha N-terminal domain (alpha-NTD). The segment at valine 237 to alanine 330 is alpha C-terminal domain (alpha-CTD).

This sequence belongs to the RNA polymerase alpha chain family. As to quaternary structure, homodimer. The RNAP catalytic core consists of 2 alpha, 1 beta, 1 beta' and 1 omega subunit. When a sigma factor is associated with the core the holoenzyme is formed, which can initiate transcription.

The enzyme catalyses RNA(n) + a ribonucleoside 5'-triphosphate = RNA(n+1) + diphosphate. Its function is as follows. DNA-dependent RNA polymerase catalyzes the transcription of DNA into RNA using the four ribonucleoside triphosphates as substrates. This is DNA-directed RNA polymerase subunit alpha from Dehalococcoides mccartyi (strain ATCC BAA-2266 / KCTC 15142 / 195) (Dehalococcoides ethenogenes (strain 195)).